The primary structure comprises 238 residues: Leucyl/phenylalanyl-tRNA--protein transferase (238 aa).

The protein belongs to the L/F-transferase family.

Its subcellular location is the cytoplasm. It catalyses the reaction N-terminal L-lysyl-[protein] + L-leucyl-tRNA(Leu) = N-terminal L-leucyl-L-lysyl-[protein] + tRNA(Leu) + H(+). The catalysed reaction is N-terminal L-arginyl-[protein] + L-leucyl-tRNA(Leu) = N-terminal L-leucyl-L-arginyl-[protein] + tRNA(Leu) + H(+). The enzyme catalyses L-phenylalanyl-tRNA(Phe) + an N-terminal L-alpha-aminoacyl-[protein] = an N-terminal L-phenylalanyl-L-alpha-aminoacyl-[protein] + tRNA(Phe). Functions in the N-end rule pathway of protein degradation where it conjugates Leu, Phe and, less efficiently, Met from aminoacyl-tRNAs to the N-termini of proteins containing an N-terminal arginine or lysine. The protein is Leucyl/phenylalanyl-tRNA--protein transferase of Pseudoalteromonas translucida (strain TAC 125).